Reading from the N-terminus, the 60-residue chain is Large ribosomal subunit protein bL32 (60 aa).

The interval 1-60 is disordered; that stretch reads MAVQQVKKSRSKRDIRRSHDSLTNPTLSTDKSTGELHLRHHVSPNGFYKGRKVVDTKSED. Over residues 7–16 the composition is skewed to basic residues; sequence KKSRSKRDIR. Residues 22 to 31 are compositionally biased toward polar residues; that stretch reads LTNPTLSTDK.

It belongs to the bacterial ribosomal protein bL32 family.

The polypeptide is Large ribosomal subunit protein bL32 (Francisella tularensis subsp. tularensis (strain SCHU S4 / Schu 4)).